A 329-amino-acid chain; its full sequence is Probable carboxylesterase 8 (329 aa).

Positions 73–75 (HGG) match the Involved in the stabilization of the negatively charged intermediate by the formation of the oxyanion hole motif. Residues S161, D264, and H294 contribute to the active site.

Belongs to the 'GDXG' lipolytic enzyme family. As to expression, expressed in leaves, stems, flowers and siliques.

It catalyses the reaction a carboxylic ester + H2O = an alcohol + a carboxylate + H(+). Its function is as follows. Carboxylesterase acting on esters with varying acyl chain length. The sequence is that of Probable carboxylesterase 8 (CXE8) from Arabidopsis thaliana (Mouse-ear cress).